We begin with the raw amino-acid sequence, 124 residues long: Small ribosomal subunit protein uS12 (124 aa).

The segment at 1-23 (MATINQLVRKPRRSKVTKSNSAA) is disordered. Aspartate 89 is modified (3-methylthioaspartic acid).

It belongs to the universal ribosomal protein uS12 family. Part of the 30S ribosomal subunit. Contacts proteins S8 and S17. May interact with IF1 in the 30S initiation complex.

Functionally, with S4 and S5 plays an important role in translational accuracy. Its function is as follows. Interacts with and stabilizes bases of the 16S rRNA that are involved in tRNA selection in the A site and with the mRNA backbone. Located at the interface of the 30S and 50S subunits, it traverses the body of the 30S subunit contacting proteins on the other side and probably holding the rRNA structure together. The combined cluster of proteins S8, S12 and S17 appears to hold together the shoulder and platform of the 30S subunit. The polypeptide is Small ribosomal subunit protein uS12 (Pseudoalteromonas translucida (strain TAC 125)).